Reading from the N-terminus, the 108-residue chain is Large ribosomal subunit protein bL31B (108 aa).

The segment at 85–108 (PKPETSVEEVLPKGKKKAPAKKKK) is disordered. Over residues 97–108 (KGKKKAPAKKKK) the composition is skewed to basic residues.

Belongs to the bacterial ribosomal protein bL31 family. Type B subfamily. As to quaternary structure, part of the 50S ribosomal subunit.

This Chlamydia muridarum (strain MoPn / Nigg) protein is Large ribosomal subunit protein bL31B.